Here is a 354-residue protein sequence, read N- to C-terminus: S-adenosylmethionine:tRNA ribosyltransferase-isomerase (354 aa).

Belongs to the QueA family. Monomer.

Its subcellular location is the cytoplasm. It carries out the reaction 7-aminomethyl-7-carbaguanosine(34) in tRNA + S-adenosyl-L-methionine = epoxyqueuosine(34) in tRNA + adenine + L-methionine + 2 H(+). The protein operates within tRNA modification; tRNA-queuosine biosynthesis. Transfers and isomerizes the ribose moiety from AdoMet to the 7-aminomethyl group of 7-deazaguanine (preQ1-tRNA) to give epoxyqueuosine (oQ-tRNA). The polypeptide is S-adenosylmethionine:tRNA ribosyltransferase-isomerase (Klebsiella pneumoniae (strain 342)).